We begin with the raw amino-acid sequence, 88 residues long: Large ribosomal subunit protein bL31B (88 aa).

Belongs to the bacterial ribosomal protein bL31 family. Type B subfamily. Part of the 50S ribosomal subunit.

The chain is Large ribosomal subunit protein bL31B from Bordetella pertussis (strain Tohama I / ATCC BAA-589 / NCTC 13251).